The chain runs to 467 residues: tRNA-2-methylthio-N(6)-dimethylallyladenosine synthase (467 aa).

Residues 15 to 135 enclose the MTTase N-terminal domain; the sequence is KKIFVKTYGC…LPEYVARLAN (121 aa). Cys24, Cys60, Cys98, Cys177, Cys181, and Cys184 together coordinate [4Fe-4S] cluster. Residues 163-395 enclose the Radical SAM core domain; the sequence is LARGATAFLT…QALLGEQQLA (233 aa). Positions 398–461 constitute a TRAM domain; that stretch reads AGCAGRTMPV…RNSLRGRLRE (64 aa).

Belongs to the methylthiotransferase family. MiaB subfamily. Monomer. [4Fe-4S] cluster serves as cofactor.

It localises to the cytoplasm. The enzyme catalyses N(6)-dimethylallyladenosine(37) in tRNA + (sulfur carrier)-SH + AH2 + 2 S-adenosyl-L-methionine = 2-methylsulfanyl-N(6)-dimethylallyladenosine(37) in tRNA + (sulfur carrier)-H + 5'-deoxyadenosine + L-methionine + A + S-adenosyl-L-homocysteine + 2 H(+). Functionally, catalyzes the methylthiolation of N6-(dimethylallyl)adenosine (i(6)A), leading to the formation of 2-methylthio-N6-(dimethylallyl)adenosine (ms(2)i(6)A) at position 37 in tRNAs that read codons beginning with uridine. This is tRNA-2-methylthio-N(6)-dimethylallyladenosine synthase from Parvibaculum lavamentivorans (strain DS-1 / DSM 13023 / NCIMB 13966).